We begin with the raw amino-acid sequence, 170 residues long: Myosin regulatory light chain 2, skeletal muscle isoform type 1 (170 aa).

Ala-2 is subject to N,N,N-trimethylalanine. 2 positions are modified to phosphoserine: Ser-16 and Ser-17. Phosphothreonine is present on residues Thr-26 and Thr-36. The EF-hand 1 domain occupies 26–61; the sequence is TQIQEFKEAFTVIDQNRDGIIDKEDLRDTFAAMGRL. Residues Asp-39, Asn-41, Asp-43, and Asp-50 each coordinate Ca(2+). Ser-76 is modified (phosphoserine). EF-hand domains follow at residues 96-131 and 132-167; these read DPED…QCDR and FSQE…GDAK. The residue at position 102 (Thr-102) is a Phosphothreonine.

In terms of assembly, myosin is a hexamer of 2 heavy chains and 4 light chains.

This chain is Myosin regulatory light chain 2, skeletal muscle isoform type 1, found in Oryctolagus cuniculus (Rabbit).